A 298-amino-acid chain; its full sequence is Anamorsin homolog (298 aa).

The N-terminal SAM-like domain stretch occupies residues 1 to 143 (MTQLIITHQS…IKAEKPSWKP (143 aa)). Positions 143–162 (PEEGKVLVDDIDLEGSVPDI) are linker. [2Fe-2S] cluster contacts are provided by C175, C182, C185, and C187. A fe-S binding site A region spans residues 175–187 (CKSKERACNNCNC). 4 residues coordinate [4Fe-4S] cluster: C218, C221, C229, and C232. 2 short sequence motifs (cx2C motif) span residues 218 to 221 (CGNC) and 229 to 232 (CSGC). Residues 218–232 (CGNCYLGDAFRCSGC) are fe-S binding site B.

It belongs to the anamorsin family. Monomer. The cofactor is [2Fe-2S] cluster. It depends on [4Fe-4S] cluster as a cofactor.

It localises to the cytoplasm. The protein resides in the mitochondrion intermembrane space. Its function is as follows. Component of the cytosolic iron-sulfur (Fe-S) protein assembly (CIA) machinery. Required for the maturation of extramitochondrial Fe-S proteins. Part of an electron transfer chain functioning in an early step of cytosolic Fe-S biogenesis, facilitating the de novo assembly of a [4Fe-4S] cluster on the cytosolic Fe-S scaffold complex. Electrons are transferred from NADPH via a FAD- and FMN-containing diflavin oxidoreductase. Together with the diflavin oxidoreductase, also required for the assembly of the diferric tyrosyl radical cofactor of ribonucleotide reductase (RNR), probably by providing electrons for reduction during radical cofactor maturation in the catalytic small subunit. In Cryptosporidium parvum (strain Iowa II), this protein is Anamorsin homolog.